The primary structure comprises 323 residues: Quinolinate synthase (323 aa).

His39 and Ser56 together coordinate iminosuccinate. Position 101 (Cys101) interacts with [4Fe-4S] cluster. Iminosuccinate contacts are provided by residues 127–129 and Ser144; that span reads YIN. Residue Cys187 coordinates [4Fe-4S] cluster. Residues 213-215 and Thr230 each bind iminosuccinate; that span reads HPE. A [4Fe-4S] cluster-binding site is contributed by Cys280.

The protein belongs to the quinolinate synthase family. Type 2 subfamily. Requires [4Fe-4S] cluster as cofactor.

The protein resides in the cytoplasm. The enzyme catalyses iminosuccinate + dihydroxyacetone phosphate = quinolinate + phosphate + 2 H2O + H(+). It functions in the pathway cofactor biosynthesis; NAD(+) biosynthesis; quinolinate from iminoaspartate: step 1/1. Functionally, catalyzes the condensation of iminoaspartate with dihydroxyacetone phosphate to form quinolinate. This Chlorobium phaeobacteroides (strain DSM 266 / SMG 266 / 2430) protein is Quinolinate synthase.